Reading from the N-terminus, the 103-residue chain is Histone H4 (103 aa).

Gly residues predominate over residues 1–14 (MSGRGKGGKGLGKG). The segment at 1–20 (MSGRGKGGKGLGKGGAKRHR) is disordered. Serine 2 is subject to N-acetylserine. N6-acetyllysine is present on lysine 17. The DNA-binding element occupies 17–21 (KRHRK). The residue at position 21 (lysine 21) is an N6-methyllysine.

This sequence belongs to the histone H4 family. The nucleosome is a histone octamer containing two molecules each of H2A, H2B, H3 and H4 assembled in one H3-H4 heterotetramer and two H2A-H2B heterodimers. The octamer wraps approximately 147 bp of DNA.

Its subcellular location is the nucleus. It is found in the chromosome. Its function is as follows. Core component of nucleosome. Nucleosomes wrap and compact DNA into chromatin, limiting DNA accessibility to the cellular machineries which require DNA as a template. Histones thereby play a central role in transcription regulation, DNA repair, DNA replication and chromosomal stability. DNA accessibility is regulated via a complex set of post-translational modifications of histones, also called histone code, and nucleosome remodeling. The protein is Histone H4 of Capsicum annuum (Capsicum pepper).